Consider the following 362-residue polypeptide: 3-dehydroquinate synthase (362 aa).

Residues 71-76, 105-109, 129-130, K142, K151, and 169-172 contribute to the NAD(+) site; these read DGEQYK, GVIGD, TT, and CLST. The Zn(2+) site is built by E184, H247, and H264.

Belongs to the sugar phosphate cyclases superfamily. Dehydroquinate synthase family. Co(2+) serves as cofactor. The cofactor is Zn(2+). It depends on NAD(+) as a cofactor.

The protein resides in the cytoplasm. The enzyme catalyses 7-phospho-2-dehydro-3-deoxy-D-arabino-heptonate = 3-dehydroquinate + phosphate. It participates in metabolic intermediate biosynthesis; chorismate biosynthesis; chorismate from D-erythrose 4-phosphate and phosphoenolpyruvate: step 2/7. Its function is as follows. Catalyzes the conversion of 3-deoxy-D-arabino-heptulosonate 7-phosphate (DAHP) to dehydroquinate (DHQ). In Vibrio atlanticus (strain LGP32) (Vibrio splendidus (strain Mel32)), this protein is 3-dehydroquinate synthase.